A 346-amino-acid chain; its full sequence is Holliday junction branch migration complex subunit RuvB (346 aa).

The large ATPase domain (RuvB-L) stretch occupies residues 1-181 (MSDRNPLIDA…FGIPVRLNFY (181 aa)). ATP contacts are provided by residues L20, R21, G62, K65, T66, T67, 128 to 130 (EDF), R171, Y181, and R218. Mg(2+) is bound at residue T66. The small ATPAse domain (RuvB-S) stretch occupies residues 182–252 (TVEELEYIVR…IADEALSRLE (71 aa)). The interval 255–346 (NRGLDQLDRR…SQYGLFMEDE (92 aa)) is head domain (RuvB-H). Positions 291, 310, and 315 each coordinate DNA.

It belongs to the RuvB family. Homohexamer. Forms an RuvA(8)-RuvB(12)-Holliday junction (HJ) complex. HJ DNA is sandwiched between 2 RuvA tetramers; dsDNA enters through RuvA and exits via RuvB. An RuvB hexamer assembles on each DNA strand where it exits the tetramer. Each RuvB hexamer is contacted by two RuvA subunits (via domain III) on 2 adjacent RuvB subunits; this complex drives branch migration. In the full resolvosome a probable DNA-RuvA(4)-RuvB(12)-RuvC(2) complex forms which resolves the HJ.

The protein localises to the cytoplasm. The catalysed reaction is ATP + H2O = ADP + phosphate + H(+). Its function is as follows. The RuvA-RuvB-RuvC complex processes Holliday junction (HJ) DNA during genetic recombination and DNA repair, while the RuvA-RuvB complex plays an important role in the rescue of blocked DNA replication forks via replication fork reversal (RFR). RuvA specifically binds to HJ cruciform DNA, conferring on it an open structure. The RuvB hexamer acts as an ATP-dependent pump, pulling dsDNA into and through the RuvAB complex. RuvB forms 2 homohexamers on either side of HJ DNA bound by 1 or 2 RuvA tetramers; 4 subunits per hexamer contact DNA at a time. Coordinated motions by a converter formed by DNA-disengaged RuvB subunits stimulates ATP hydrolysis and nucleotide exchange. Immobilization of the converter enables RuvB to convert the ATP-contained energy into a lever motion, pulling 2 nucleotides of DNA out of the RuvA tetramer per ATP hydrolyzed, thus driving DNA branch migration. The RuvB motors rotate together with the DNA substrate, which together with the progressing nucleotide cycle form the mechanistic basis for DNA recombination by continuous HJ branch migration. Branch migration allows RuvC to scan DNA until it finds its consensus sequence, where it cleaves and resolves cruciform DNA. This is Holliday junction branch migration complex subunit RuvB from Brucella melitensis biotype 2 (strain ATCC 23457).